A 469-amino-acid chain; its full sequence is Cysteine--tRNA ligase (469 aa).

Cysteine 28 contacts Zn(2+). The short motif at 30–40 is the 'HIGH' region element; sequence CTVYDLCHIGH. The Zn(2+) site is built by cysteine 216, histidine 241, and glutamate 245. Residues 273-277 carry the 'KMSKS' region motif; the sequence is KMSKS. Residue lysine 276 coordinates ATP.

This sequence belongs to the class-I aminoacyl-tRNA synthetase family. Monomer. The cofactor is Zn(2+).

It localises to the cytoplasm. The enzyme catalyses tRNA(Cys) + L-cysteine + ATP = L-cysteinyl-tRNA(Cys) + AMP + diphosphate. This chain is Cysteine--tRNA ligase, found in Colwellia psychrerythraea (strain 34H / ATCC BAA-681) (Vibrio psychroerythus).